The following is a 382-amino-acid chain: S-adenosylmethionine synthase (382 aa).

Residue H15 participates in ATP binding. D17 contacts Mg(2+). E43 serves as a coordination point for K(+). 2 residues coordinate L-methionine: E56 and Q99. Residues 99–109 (QSPDINQGVDR) are flexible loop. Residues 164–166 (DAK), 230–231 (RF), D239, 245–246 (RK), A262, and K266 each bind ATP. L-methionine is bound at residue D239. K270 serves as a coordination point for L-methionine.

Belongs to the AdoMet synthase family. Homotetramer; dimer of dimers. The cofactor is Mg(2+). K(+) serves as cofactor.

It is found in the cytoplasm. The catalysed reaction is L-methionine + ATP + H2O = S-adenosyl-L-methionine + phosphate + diphosphate. It functions in the pathway amino-acid biosynthesis; S-adenosyl-L-methionine biosynthesis; S-adenosyl-L-methionine from L-methionine: step 1/1. Catalyzes the formation of S-adenosylmethionine (AdoMet) from methionine and ATP. The overall synthetic reaction is composed of two sequential steps, AdoMet formation and the subsequent tripolyphosphate hydrolysis which occurs prior to release of AdoMet from the enzyme. In Glaesserella parasuis serovar 5 (strain SH0165) (Haemophilus parasuis), this protein is S-adenosylmethionine synthase.